A 542-amino-acid chain; its full sequence is CTP synthase (542 aa).

Positions 1-265 (MARYVFITGG…DSEVLSAFGI (265 aa)) are amidoligase domain. Residue serine 13 participates in CTP binding. Serine 13 is a binding site for UTP. 14-19 (SLGKGI) provides a ligand contact to ATP. Tyrosine 54 serves as a coordination point for L-glutamine. An ATP-binding site is contributed by aspartate 71. 2 residues coordinate Mg(2+): aspartate 71 and glutamate 139. Residues 146-148 (DIE), 186-191 (KTKPTQ), and lysine 222 each bind CTP. UTP contacts are provided by residues 186-191 (KTKPTQ) and lysine 222. Residues 291–541 (TIAVVGKYTG…IEAAIEQSRL (251 aa)) enclose the Glutamine amidotransferase type-1 domain. Glycine 353 is a binding site for L-glutamine. Residue cysteine 380 is the Nucleophile; for glutamine hydrolysis of the active site. Residues 381–384 (FGMQ), glutamate 404, and arginine 469 contribute to the L-glutamine site. Residues histidine 514 and glutamate 516 contribute to the active site.

It belongs to the CTP synthase family. As to quaternary structure, homotetramer.

The catalysed reaction is UTP + L-glutamine + ATP + H2O = CTP + L-glutamate + ADP + phosphate + 2 H(+). It carries out the reaction L-glutamine + H2O = L-glutamate + NH4(+). The enzyme catalyses UTP + NH4(+) + ATP = CTP + ADP + phosphate + 2 H(+). The protein operates within pyrimidine metabolism; CTP biosynthesis via de novo pathway; CTP from UDP: step 2/2. Allosterically activated by GTP, when glutamine is the substrate; GTP has no effect on the reaction when ammonia is the substrate. The allosteric effector GTP functions by stabilizing the protein conformation that binds the tetrahedral intermediate(s) formed during glutamine hydrolysis. Inhibited by the product CTP, via allosteric rather than competitive inhibition. Its function is as follows. Catalyzes the ATP-dependent amination of UTP to CTP with either L-glutamine or ammonia as the source of nitrogen. Regulates intracellular CTP levels through interactions with the four ribonucleotide triphosphates. The chain is CTP synthase from Brucella melitensis biotype 2 (strain ATCC 23457).